The following is a 429-amino-acid chain: Adenylosuccinate synthetase (429 aa).

GTP is bound by residues 12-18 (GDEGKGK) and 40-42 (GHT). The active-site Proton acceptor is the D13. Residues D13 and G40 each contribute to the Mg(2+) site. IMP-binding positions include 13 to 16 (DEGK), 38 to 41 (NAGH), T128, R142, Q223, T238, and R302. H41 (proton donor) is an active-site residue. 298-304 (TVTGRPR) contributes to the substrate binding site. Residues R304, 330–332 (LLD), and 412–414 (SVG) each bind GTP.

Belongs to the adenylosuccinate synthetase family. As to quaternary structure, homodimer. Requires Mg(2+) as cofactor.

It localises to the cytoplasm. The catalysed reaction is IMP + L-aspartate + GTP = N(6)-(1,2-dicarboxyethyl)-AMP + GDP + phosphate + 2 H(+). Its pathway is purine metabolism; AMP biosynthesis via de novo pathway; AMP from IMP: step 1/2. Its function is as follows. Plays an important role in the de novo pathway of purine nucleotide biosynthesis. Catalyzes the first committed step in the biosynthesis of AMP from IMP. The chain is Adenylosuccinate synthetase from Lactobacillus johnsonii (strain CNCM I-12250 / La1 / NCC 533).